Consider the following 2287-residue polypeptide: Protein Ycf2 (2287 aa).

1641 to 1648 (GSIGTGRS) contributes to the ATP binding site.

Belongs to the Ycf2 family.

It is found in the plastid. Its subcellular location is the chloroplast stroma. Functionally, probable ATPase of unknown function. Its presence in a non-photosynthetic plant (Epifagus virginiana) and experiments in tobacco indicate that it has an essential function which is probably not related to photosynthesis. The protein is Protein Ycf2 of Lepidium virginicum (Virginia pepperweed).